The primary structure comprises 850 residues: Penicillin-binding protein 1A (850 aa).

Topologically, residues 1–5 (MKFVK) are cytoplasmic. A helical; Signal-anchor for type II membrane protein transmembrane segment spans residues 6 to 26 (YFLILAVCCILLGAGSIYGLY). Residues 27-850 (RYIEPQLPDV…IDNGEAQELF (824 aa)) are Periplasmic-facing. The tract at residues 48 to 216 (MQIYSADGEL…STFNPLYSMD (169 aa)) is transglycosylase. Glu-86 functions as the Proton donor; for transglycosylase activity in the catalytic mechanism. The interval 400-710 (DVLQTGQQIW…GWRAGRDLQR (311 aa)) is transpeptidase. Ser-465 acts as the Acyl-ester intermediate; for transpeptidase activity in catalysis.

It in the N-terminal section; belongs to the glycosyltransferase 51 family. This sequence in the C-terminal section; belongs to the transpeptidase family.

It localises to the cell inner membrane. The enzyme catalyses [GlcNAc-(1-&gt;4)-Mur2Ac(oyl-L-Ala-gamma-D-Glu-L-Lys-D-Ala-D-Ala)](n)-di-trans,octa-cis-undecaprenyl diphosphate + beta-D-GlcNAc-(1-&gt;4)-Mur2Ac(oyl-L-Ala-gamma-D-Glu-L-Lys-D-Ala-D-Ala)-di-trans,octa-cis-undecaprenyl diphosphate = [GlcNAc-(1-&gt;4)-Mur2Ac(oyl-L-Ala-gamma-D-Glu-L-Lys-D-Ala-D-Ala)](n+1)-di-trans,octa-cis-undecaprenyl diphosphate + di-trans,octa-cis-undecaprenyl diphosphate + H(+). The catalysed reaction is Preferential cleavage: (Ac)2-L-Lys-D-Ala-|-D-Ala. Also transpeptidation of peptidyl-alanyl moieties that are N-acyl substituents of D-alanine.. It participates in cell wall biogenesis; peptidoglycan biosynthesis. Cell wall formation. Synthesis of cross-linked peptidoglycan from the lipid intermediates. The enzyme has a penicillin-insensitive transglycosylase N-terminal domain (formation of linear glycan strands) and a penicillin-sensitive transpeptidase C-terminal domain (cross-linking of the peptide subunits). The protein is Penicillin-binding protein 1A (mrcA) of Escherichia coli (strain K12).